A 244-amino-acid chain; its full sequence is T-cell immunoreceptor with Ig and ITIM domains (244 aa).

The signal sequence occupies residues 1–21 (MRWCLLLIWAQGLRQAPLASG). Positions 22–124 (MMTGTIETTG…DGTYTGRIFL (103 aa)) constitute an Ig-like V-type domain. The Extracellular portion of the chain corresponds to 22-141 (MMTGTIETTG…AEHGARFQIP (120 aa)). Residues asparagine 32 and asparagine 101 are each glycosylated (N-linked (GlcNAc...) asparagine). Residues 32-42 (NISAEKGGSII) are homodimerization. A disulfide bond links cysteine 45 and cysteine 108. The helical transmembrane segment at 142–162 (LLGAMAATLVVICTAVIVVVA) threads the bilayer. Over 163–244 (LTRKKKALRI…GNCSFFTETG (82 aa)) the chain is Cytoplasmic. Position 225 is a phosphotyrosine (tyrosine 225). Residues 229–234 (LSYRSL) carry the ITIM motif motif.

As to quaternary structure, homodimer in cis; binds with high affinity to PVR, forming a heterotetrameric assembly of two TIGIT and two PVR molecules. Binds with lower affinity to NECTIN2 and NECTIN3. Interacts with GRB2. Interacts with NECTIN4. In terms of tissue distribution, expressed at low levels on peripheral memory and regulatory CD4+ T-cells and NK cells and is up-regulated following activation of these cells (at protein level).

It localises to the cell membrane. Its function is as follows. Inhibitory receptor that plays a role in the modulation of immune responses. Suppresses T-cell activation by promoting the generation of mature immunoregulatory dendritic cells. Upon binding to its ligands PVR/CD155 or NECTIN2/CD112, which are expressed on antigen-presenting cells, sends inhibitory signals to the T-cell or NK cell. Mechanistically, interaction with ligand leads to phosphorylation of the cytoplasmic tail by Src family tyrosine kinases such as FYN or LCK, allowing subsequent binding to adapter GRB2 and SHIP1/INPP5D. In turn, inhibits PI3K and MAPK signaling cascades. In addition, associates with beta-arrestin-2/ARRB2 to recruit SHIP1/INPP5D that suppresses autoubiquitination of TRAF6 and subsequently inhibits NF-kappa-B signaling pathway. Also acts as a receptor for NECTIN4 to inhibit NK cell cytotoxicity. The sequence is that of T-cell immunoreceptor with Ig and ITIM domains (TIGIT) from Homo sapiens (Human).